The primary structure comprises 974 residues: ATP-dependent RNA helicase glh-2 (974 aa).

The tract at residues histidine 212 to glycine 435 is disordered. The span at glycine 215–glutamine 250 shows a compositional bias: gly residues. Residues asparagine 256–histidine 267 are compositionally biased toward polar residues. 2 consecutive CCHC-type zinc fingers follow at residues asparagine 257 to glutamate 274 and arginine 282 to glutamate 299. Basic and acidic residues-rich tracts occupy residues arginine 268–arginine 282 and asparagine 293–arginine 307. Over residues glycine 309–glutamine 364 the composition is skewed to gly residues. The span at asparagine 370–histidine 381 shows a compositional bias: polar residues. CCHC-type zinc fingers lie at residues asparagine 371–glutamate 388 and arginine 396–glutamate 413. Composition is skewed to basic and acidic residues over residues arginine 382–arginine 396 and asparagine 407–arginine 421. Gly residues predominate over residues serine 426–glycine 435. CCHC-type zinc fingers lie at residues methionine 453–glutamate 470 and arginine 473–asparagine 490. The Q motif signature appears at lysine 552–glutamine 580. A Helicase ATP-binding domain is found at leucine 583–methionine 767. Residue alanine 596 to threonine 603 participates in ATP binding. The short motif at aspartate 710–aspartate 713 is the DEAD box element. One can recognise a Helicase C-terminal domain in the interval aspartate 803 to serine 950.

It belongs to the DEAD box helicase family. DDX4/VASA subfamily. In terms of assembly, interacts (via C-terminus) with kgb-1.

The enzyme catalyses ATP + H2O = ADP + phosphate + H(+). Functionally, probable ATP-binding RNA helicase. This chain is ATP-dependent RNA helicase glh-2 (glh-2), found in Caenorhabditis elegans.